The sequence spans 428 residues: Histidinol dehydrogenase (428 aa).

Residues tyrosine 125, glutamine 186, and asparagine 209 each coordinate NAD(+). Residues serine 232, glutamine 254, and histidine 257 each coordinate substrate. Zn(2+) is bound by residues glutamine 254 and histidine 257. Residues glutamate 322 and histidine 323 each act as proton acceptor in the active site. Substrate is bound by residues histidine 323, aspartate 356, glutamate 410, and histidine 415. Position 356 (aspartate 356) interacts with Zn(2+). Histidine 415 serves as a coordination point for Zn(2+).

The protein belongs to the histidinol dehydrogenase family. Zn(2+) serves as cofactor.

It carries out the reaction L-histidinol + 2 NAD(+) + H2O = L-histidine + 2 NADH + 3 H(+). The protein operates within amino-acid biosynthesis; L-histidine biosynthesis; L-histidine from 5-phospho-alpha-D-ribose 1-diphosphate: step 9/9. Its function is as follows. Catalyzes the sequential NAD-dependent oxidations of L-histidinol to L-histidinaldehyde and then to L-histidine. This chain is Histidinol dehydrogenase, found in Lactiplantibacillus plantarum (strain ATCC BAA-793 / NCIMB 8826 / WCFS1) (Lactobacillus plantarum).